We begin with the raw amino-acid sequence, 463 residues long: Serine/threonine-protein kinase tricornered (463 aa).

A Protein kinase domain is found at 93 to 394 (FEALKVIGRG…LEDLKSVPFF (302 aa)). Residues 99–107 (IGRGAFGEV) and Lys-122 each bind ATP. The interaction with mats and Mob1 stretch occupies residues 119–180 (YAMKVLRKAD…EFLPGGDMMT (62 aa)). Asp-216 (proton acceptor) is an active-site residue. A Phosphoserine modification is found at Ser-292. The AGC-kinase C-terminal domain maps to 395–463 (RGVDWEHIRE…YKRFEVRNLE (69 aa)). Position 453 is a phosphothreonine (Thr-453).

It belongs to the protein kinase superfamily. AGC Ser/Thr protein kinase family. Interacts with, and is activated by, Mob1. The cofactor is Mg(2+). Expressed in the peripheral and central nervous system (at protein level). Expressed in the wing imaginal disk.

It is found in the cytoplasm. Its subcellular location is the nucleus. It catalyses the reaction L-seryl-[protein] + ATP = O-phospho-L-seryl-[protein] + ADP + H(+). The catalysed reaction is L-threonyl-[protein] + ATP = O-phospho-L-threonyl-[protein] + ADP + H(+). Activated by fry. Serine/threonine-protein kinase involved in controlling cell structure and proliferation of a variety of polarized outgrowths including epidermal hairs, bristles, arista laterals, and dendrites. Together with fry, maintains the integrity of epidermal hairs and is an essential component of the signaling pathway regulating dendritic branching of sensory neurons. Reduces neurite outgrowth by phosphorylating pav, thereby inhibiting its function in microtubule-microtubule sliding. This Drosophila melanogaster (Fruit fly) protein is Serine/threonine-protein kinase tricornered.